Consider the following 1939-residue polypeptide: Myosin-4 (1939 aa).

One can recognise a Myosin N-terminal SH3-like domain in the interval 33 to 82 (DAKSSVFVVDAKESYVKATVQSREGGKVTAKTEGGATVTVKEDQVFSMNP). Ser-36 bears the Phosphoserine mark. 2 positions are modified to phosphothreonine: Thr-64 and Thr-69. At Ser-79 the chain carries Phosphoserine. The Myosin motor domain maps to 86–782 (DKIEDMAMMT…LLGTLEEMRD (697 aa)). An N6,N6,N6-trimethyllysine modification is found at Lys-130. 179–186 (GESGAGKT) contacts ATP. At Tyr-389 the chain carries Phosphotyrosine. A Phosphothreonine modification is found at Thr-391. Position 392 is a phosphoserine (Ser-392). Thr-419 carries the post-translational modification Phosphothreonine. Tyr-424 bears the Phosphotyrosine mark. Position 625 is a phosphoserine (Ser-625). The tract at residues 659 to 681 (LNKLMTNLKSTHPHFVRCLIPNE) is actin-binding. Pros-methylhistidine is present on His-757. The actin-binding stretch occupies residues 761-775 (KFGHTKVFFKAGLLG). Thr-776 is modified (phosphothreonine). One can recognise an IQ domain in the interval 785 to 814 (LAQLITRTQAVCRGYLMRVEFRKMMERRES). Residues 843–1939 (LLKSAETEKE…EVHTKVISEE (1097 aa)) adopt a coiled-coil conformation. Ser-1092 and Ser-1096 each carry phosphoserine. Disordered stretches follow at residues 1128–1147 (AERA…SREL) and 1153–1172 (RLEE…KKRE). Residues Ser-1162 and Ser-1237 each carry the phosphoserine modification. At Thr-1241 the chain carries Phosphothreonine. A Phosphoserine modification is found at Ser-1243. Thr-1255 carries the phosphothreonine modification. Phosphoserine is present on Ser-1261. Phosphothreonine is present on Thr-1265. A Phosphoserine modification is found at Ser-1278. Thr-1286 carries the post-translational modification Phosphothreonine. 5 positions are modified to phosphoserine: Ser-1288, Ser-1292, Ser-1303, Ser-1306, and Ser-1413. Tyr-1464 bears the Phosphotyrosine mark. At Thr-1467 the chain carries Phosphothreonine. Ser-1474 is modified (phosphoserine). Tyr-1492 carries the phosphotyrosine modification. The residue at position 1495 (Ser-1495) is a Phosphoserine. Thr-1501 bears the Phosphothreonine mark. The residue at position 1514 (Ser-1514) is a Phosphoserine. Thr-1517 carries the phosphothreonine modification. 8 positions are modified to phosphoserine: Ser-1542, Ser-1547, Ser-1554, Ser-1574, Ser-1600, Ser-1603, Ser-1714, and Ser-1726. A phosphothreonine mark is found at Thr-1730 and Thr-1736. Residue Ser-1739 is modified to Phosphoserine.

It belongs to the TRAFAC class myosin-kinesin ATPase superfamily. Myosin family. Muscle myosin is a hexameric protein that consists of 2 heavy chain subunits (MHC), 2 alkali light chain subunits (MLC) and 2 regulatory light chain subunits (MLC-2).

It localises to the cytoplasm. Its subcellular location is the myofibril. Muscle contraction. The protein is Myosin-4 of Rattus norvegicus (Rat).